The chain runs to 309 residues: MLRVVVLGAGAGGGVPQWNCGCEGCRTARAIGDELLRTQASVAFSGDGEHWFLINASPDLRQQLNATPQLHPKPGALRHTPVAGVILTNGEVDAVAGLLSMREGSPFTVYAHEKVLAILSANSIFNVLNEKNVRRQPIAISEPFEPRLVDGARSGIEVLPFAVPGKSAWYLEGKAHPGGETGDGDTLGLKITDKTTGKCFYFIAACAEVTDALKAEIDGAALVFFDGTVWQDDEMIKAGLGHKTGKSMGHVAMSGEDGAIARLADLDIDRKLFLHINNSNPALLPASPERKAAEQAGWQIPADGTEIVL.

The protein belongs to the PqqB family.

It participates in cofactor biosynthesis; pyrroloquinoline quinone biosynthesis. Functionally, may be involved in the transport of PQQ or its precursor to the periplasm. The protein is Coenzyme PQQ synthesis protein B of Bradyrhizobium diazoefficiens (strain JCM 10833 / BCRC 13528 / IAM 13628 / NBRC 14792 / USDA 110).